The primary structure comprises 137 residues: uncharacterized protein (137 aa).

This is an uncharacterized protein from Rickettsia prowazekii (strain Madrid E).